The following is a 505-amino-acid chain: Adenylosuccinate synthetase, chloroplastic (505 aa).

A chloroplast-targeting transit peptide spans 1-60; that stretch reads MTTMNISTLRLDSNPITTSTKSTTHRSGALGYNGSYSCRLLQFQKKNKAPSIIVCSTKPL. Residues 92–98 and 120–122 each bind GTP; these read GDEGKGK and GHT. Asp-93 serves as the catalytic Proton acceptor. Mg(2+)-binding residues include Asp-93 and Gly-120. IMP is bound by residues 93 to 96, 118 to 121, Thr-210, Arg-224, Gln-304, Thr-319, and Arg-383; these read DEGK and NAGH. His-121 acts as the Proton donor in catalysis. 379–385 serves as a coordination point for substrate; that stretch reads TTTGRPR. Residues Arg-385, 411–413, and 494–496 each bind GTP; these read KLD and GVG.

Belongs to the adenylosuccinate synthetase family. In terms of assembly, homodimer. It depends on Mg(2+) as a cofactor.

The protein localises to the plastid. It localises to the chloroplast. The catalysed reaction is IMP + L-aspartate + GTP = N(6)-(1,2-dicarboxyethyl)-AMP + GDP + phosphate + 2 H(+). Its pathway is purine metabolism; AMP biosynthesis via de novo pathway; AMP from IMP: step 1/2. Plays an important role in the de novo pathway and in the salvage pathway of purine nucleotide biosynthesis. Catalyzes the first committed step in the biosynthesis of AMP from IMP. This chain is Adenylosuccinate synthetase, chloroplastic, found in Nicotiana tabacum (Common tobacco).